The sequence spans 523 residues: Fidgetin-like protein 1 (523 aa).

The interval 114–154 is disordered; that stretch reads PVQQAVKSRPEGQFPESRNNSTKKIDAQQYSSESSSQSGFG. Residues 141–151 show a composition bias toward low complexity; sequence QQYSSESSSQS. ATP is bound by residues alanine 253 and 293–298; that span reads GTGKTL.

The protein belongs to the AAA ATPase family. Hexamer. The cofactor is Mg(2+).

The enzyme catalyses ATP + H2O = ADP + phosphate + H(+). This chain is Fidgetin-like protein 1, found in Drosophila melanogaster (Fruit fly).